A 3746-amino-acid polypeptide reads, in one-letter code: N-(5-amino-5-carboxypentanoyl)-L-cysteinyl-D-valine synthase (3746 aa).

An adenylation (A) domain 1 region spans residues 299-711 (EEVVERHEDK…GRADFQIKLR (413 aa)). A Carrier 1 domain is found at 818–895 (DLRGDTEIAL…RMADLLQNKQ (78 aa)). Ser855 bears the O-(pantetheine 4'-phosphoryl)serine mark. A condensation (C) domain 1 region spans residues 918–1372 (NIYLANSLQQ…YLSSIQLEQL (455 aa)). The segment at 1391 to 1801 (FENEASQKPD…GRNDFQVKIR (411 aa)) is adenylation (A) domain 2. The Carrier 2 domain occupies 1902 to 1979 (PPRSEIERSL…AQTHLILNDA (78 aa)). Ser1939 is subject to O-(pantetheine 4'-phosphoryl)serine. A condensation (C) domain 2 region spans residues 1994–2434 (QMIPVSRAQE…SELSAEGINE (441 aa)). An adenylation (A) domain 3 region spans residues 2478-2883 (AFLAAEKIAV…GRGDLQIKMR (406 aa)). The region spanning 2991-3066 (PPRNIIEAKM…ALHDHVFMKD (76 aa)) is the Carrier 3 domain. At Ser3026 the chain carries O-(pantetheine 4'-phosphoryl)serine. Residues 3084–3500 (GEAPLLPIQD…NKILDGRASQ (417 aa)) form an epimerase (E) domain region. The interval 3530-3732 (TLFLLPPGEG…FSWVGNPQQV (203 aa)) is thioesterase (TE) domain.

Belongs to the NRP synthetase family. It depends on pantetheine 4'-phosphate as a cofactor. Mg(2+) serves as cofactor.

The protein localises to the cytoplasm. The protein resides in the cytosol. Its subcellular location is the vacuole membrane. The catalysed reaction is L-2-aminoadipate + L-valine + L-cysteine + 3 ATP + H2O = N-[(5S)-5-amino-5-carboxypentanoyl]-L-cysteinyl-D-valine + 3 AMP + 3 diphosphate + 3 H(+). It participates in antibiotic biosynthesis; penicillin G biosynthesis; penicillin G from L-alpha-aminoadipate and L-cysteine and L-valine: step 1/3. Its function is as follows. Nonribosomal peptide synthetase; part of the gene cluster that mediates the biosynthesis of penicillin, the world's most important antibiotic. The trimodular NRPS acvA produces the tripeptide N-[(5S)-5-amino-5-carboxypentanoyl]-L-cysteinyl-D-valine (LLD-ACV or ACV) via condensation of the 3 residues L-2-aminoadipate, L-cysteine and L-valine. The precursor amino acids for penicillin biosynthesis are withdrawn from the vacuolar amino acid pool by the MFS-type transporter penV. Each of the constituent amino acids of the tripeptide ACV are activated as aminoacyl-adenylates with peptide bonds formed through the participation of amino acid thioester intermediates. The penicillin biosynthesis occurs via 3 enzymatic steps, the first corresponding to the production of the tripeptide N-[(5S)-5-amino-5-carboxypentanoyl]-L-cysteinyl-D-valine (LLD-ACV or ACV) by the NRPS acvA. The tripeptide ACV is then cyclized to isopenicillin N (IPN) by the isopenicillin N synthase ipnA that forms the beta-lactam nucleus. Finally, the alpha-aminoadipyl side chain is exchanged for phenylacetic acid by the isopenicillin N acyltransferase aatA to yield penicillin in the peroxisomal matrix. This is N-(5-amino-5-carboxypentanoyl)-L-cysteinyl-D-valine synthase from Penicillium chrysogenum (Penicillium notatum).